The chain runs to 434 residues: Histidine--tRNA ligase (434 aa).

A disordered region spans residues 412–434 (DQTTVPVEAFPGDHDAPTYEDVV).

Belongs to the class-II aminoacyl-tRNA synthetase family.

It is found in the cytoplasm. The catalysed reaction is tRNA(His) + L-histidine + ATP = L-histidyl-tRNA(His) + AMP + diphosphate + H(+). This is Histidine--tRNA ligase from Haloquadratum walsbyi (strain DSM 16790 / HBSQ001).